Reading from the N-terminus, the 1142-residue chain is Potassium channel subfamily T member 2 (1142 aa).

The Cytoplasmic portion of the chain corresponds to 1 to 63 (MVDLESEVPP…KNQRSSLRIR (63 aa)). Residues 64-84 (LFNFSLKLLSCLLYIIRVLLE) form a helical membrane-spanning segment. Residues 85 to 101 (KPSQGNDWSHIFWVNRS) lie on the Extracellular side of the membrane. Asn-99 carries N-linked (GlcNAc...) asparagine glycosylation. The chain crosses the membrane as a helical span at residues 102-122 (LPLWGLQVSVALISLFETILL). The Cytoplasmic segment spans residues 123-137 (GYLSYKGNIWEQILR). The helical transmembrane segment at 138–158 (VPFILEIINAVPFIISIFWPT) threads the bilayer. Topologically, residues 159–160 (LR) are extracellular. The helical transmembrane segment at 161 to 173 (NLFVPVFLNCWLA) threads the bilayer. Residues 174 to 198 (KHALENMINDLHRAIQRTQSAMFNQ) lie on the Cytoplasmic side of the membrane. The helical transmembrane segment at 199 to 219 (VLILISTLLCLIFTCICGIQH) threads the bilayer. The Extracellular portion of the chain corresponds to 220–228 (LERIGKKLN). The pore-forming intramembrane region spans 229–249 (LFDSLYFCIVTFSTVGFGDVT). Residues 250 to 256 (PETWSSK) are Extracellular-facing. Residues 257 to 277 (LFVVAMICVALVVLPIQFEQL) traverse the membrane as a helical segment. Over 278–1142 (AYLWMERQKS…VQDSREETQL (865 aa)) the chain is Cytoplasmic. RCK N-terminal domains lie at 299 to 435 (EKHV…DHVV) and 725 to 865 (NKLI…CYSL). Disordered regions lie at residues 989-1044 (DTKD…EKIT) and 1118-1142 (PNSE…ETQL). The segment covering 1017–1037 (LRRKSMQWARRLSRKGPKHSG) has biased composition (basic residues). Positions 1118–1129 (PNSEPSRKNSIC) are enriched in polar residues.

The protein belongs to the potassium channel family. Calcium-activated (TC 1.A.1.3) subfamily. KCa4.2/KCNT2 sub-subfamily. Homotetramer. Forms heteromer with KCNT1; heteromeric channels differ from those of homomeric channels in their unitary conductance, kinetic behavior, subcellular localization, and response to activation of protein kinase C. Post-translationally, phosphorylated by protein kinase C. Phosphorylation of the C-terminal domain inhibits channel activity. In terms of tissue distribution, detected in brain, and at low levels in heart. Detected in brainstem, including auditory neurons such as the medial nucleus of the trapezoid body. Detected in the olfactory bulb, red nucleus, facial nucleus, pontine nucleus, oculomotor nucleus, substantia nigra, deep cerebellar nuclei, vestibular nucleus, and the thalamus. Detected in hippocampal CA1, CA2, and CA3 regions, the dentate gyrus, supraoptic nucleus, hypothalamus, dorsal root ganglion, and cortical layers II, III, and V. Detected in striatum cholinergic interneurons.

The protein resides in the cell membrane. The enzyme catalyses K(+)(in) = K(+)(out). Its activity is regulated as follows. Are normally in a closed state unless activated by an increase in intracellular Na(+) and Cl(-). Inhibited upon stimulation of G-protein coupled receptors, such as CHRM1 and GRM1. There is conflicting data about the effect of ATP on KNCT2 channels activity. Intracellular ATP was initially report to inhibit the channel activity. However, others studies conclude that KNCT2 channels are not inhibited by intracellular ATP. Functionally, sodium-activated and chloride-activated potassium channel. Produces rapidly activating outward rectifier K(+) currents. Contributes to regulate neuronal excitability. This Rattus norvegicus (Rat) protein is Potassium channel subfamily T member 2 (Kcnt2).